A 141-amino-acid chain; its full sequence is Transcriptional regulator MraZ (141 aa).

2 consecutive SpoVT-AbrB domains span residues 5 to 47 (TFNL…KPAD) and 76 to 119 (ANLV…DKVQ).

This sequence belongs to the MraZ family. In terms of assembly, forms oligomers.

It is found in the cytoplasm. The protein localises to the nucleoid. The chain is Transcriptional regulator MraZ from Mycoplasma genitalium (strain ATCC 33530 / DSM 19775 / NCTC 10195 / G37) (Mycoplasmoides genitalium).